The sequence spans 146 residues: MSEIIWDLALIQKYNHSGPRYTSYPTALEFNENYTNEDFIRAAARYPERPLSLYVHIPFCHKLCYFCGCNKVITRHRHKVEIYLDYLEREIKTRAPLFQNRLVTQIHWGRGTPTYLDEDQSARLMQMLRANFDVSDDAEISIEMDP.

An S-adenosyl-L-methionine-binding site is contributed by tyrosine 54. 2 residues coordinate [4Fe-4S] cluster: cysteine 60 and cysteine 64. Phenylalanine 66 provides a ligand contact to S-adenosyl-L-methionine. A [4Fe-4S] cluster-binding site is contributed by cysteine 67. Residues 111–112 and glutamate 143 each bind S-adenosyl-L-methionine; that span reads GT.

It belongs to the anaerobic coproporphyrinogen-III oxidase family. Monomer. [4Fe-4S] cluster is required as a cofactor.

The protein localises to the cytoplasm. The catalysed reaction is coproporphyrinogen III + 2 S-adenosyl-L-methionine = protoporphyrinogen IX + 2 5'-deoxyadenosine + 2 L-methionine + 2 CO2. It participates in porphyrin-containing compound metabolism; protoporphyrin-IX biosynthesis; protoporphyrinogen-IX from coproporphyrinogen-III (AdoMet route): step 1/1. In terms of biological role, involved in the heme biosynthesis. Catalyzes the anaerobic oxidative decarboxylation of propionate groups of rings A and B of coproporphyrinogen III to yield the vinyl groups in protoporphyrinogen IX. This chain is Oxygen-independent coproporphyrinogen III oxidase (hemN), found in Mannheimia haemolytica (Pasteurella haemolytica).